We begin with the raw amino-acid sequence, 797 residues long: Homoaconitase, mitochondrial (797 aa).

The transit peptide at 1 to 47 (MVARFVPSAMTVLVARRGLAMASTRRGWRGLAVNLKPAAGRQWRQAY) directs the protein to the mitochondrion. Positions 404, 471, and 474 each coordinate [4Fe-4S] cluster.

The protein belongs to the aconitase/IPM isomerase family. [4Fe-4S] cluster serves as cofactor.

It is found in the mitochondrion. It carries out the reaction (2R,3S)-homoisocitrate = cis-homoaconitate + H2O. It participates in amino-acid biosynthesis; L-lysine biosynthesis via AAA pathway; L-alpha-aminoadipate from 2-oxoglutarate: step 3/5. Its function is as follows. Catalyzes the reversible hydration of cis-homoaconitate to (2R,3S)-homoisocitrate, a step in the alpha-aminoadipate pathway for lysine biosynthesis. The sequence is that of Homoaconitase, mitochondrial (LYS4) from Chaetomium globosum (strain ATCC 6205 / CBS 148.51 / DSM 1962 / NBRC 6347 / NRRL 1970) (Soil fungus).